Consider the following 227-residue polypeptide: Cytochrome c oxidase subunit 2 (227 aa).

At 1 to 14 the chain is on the mitochondrial intermembrane side; sequence MAYPMQLGLQDATS. The helical transmembrane segment at 15-45 threads the bilayer; the sequence is PIMEELMNFHDHTLMIVFLISSLVLYLISLM. Over 46 to 59 the chain is Mitochondrial matrix; that stretch reads LTTKLIHTNTMDAQ. A helical transmembrane segment spans residues 60–87; the sequence is EVETIWTILPAIILVLIALPSLRILYMM. The Mitochondrial intermembrane segment spans residues 88–227; it reads DEINNPVLTV…FFENWSSSMT (140 aa). His-161, Cys-196, Glu-198, Cys-200, His-204, and Met-207 together coordinate Cu cation. Residue Glu-198 participates in Mg(2+) binding.

This sequence belongs to the cytochrome c oxidase subunit 2 family. In terms of assembly, component of the cytochrome c oxidase (complex IV, CIV), a multisubunit enzyme composed of 14 subunits. The complex is composed of a catalytic core of 3 subunits MT-CO1, MT-CO2 and MT-CO3, encoded in the mitochondrial DNA, and 11 supernumerary subunits COX4I, COX5A, COX5B, COX6A, COX6B, COX6C, COX7A, COX7B, COX7C, COX8 and NDUFA4, which are encoded in the nuclear genome. The complex exists as a monomer or a dimer and forms supercomplexes (SCs) in the inner mitochondrial membrane with NADH-ubiquinone oxidoreductase (complex I, CI) and ubiquinol-cytochrome c oxidoreductase (cytochrome b-c1 complex, complex III, CIII), resulting in different assemblies (supercomplex SCI(1)III(2)IV(1) and megacomplex MCI(2)III(2)IV(2)). Found in a complex with TMEM177, COA6, COX18, COX20, SCO1 and SCO2. Interacts with TMEM177 in a COX20-dependent manner. Interacts with COX20. Interacts with COX16. The cofactor is Cu cation.

The protein resides in the mitochondrion inner membrane. It catalyses the reaction 4 Fe(II)-[cytochrome c] + O2 + 8 H(+)(in) = 4 Fe(III)-[cytochrome c] + 2 H2O + 4 H(+)(out). Its function is as follows. Component of the cytochrome c oxidase, the last enzyme in the mitochondrial electron transport chain which drives oxidative phosphorylation. The respiratory chain contains 3 multisubunit complexes succinate dehydrogenase (complex II, CII), ubiquinol-cytochrome c oxidoreductase (cytochrome b-c1 complex, complex III, CIII) and cytochrome c oxidase (complex IV, CIV), that cooperate to transfer electrons derived from NADH and succinate to molecular oxygen, creating an electrochemical gradient over the inner membrane that drives transmembrane transport and the ATP synthase. Cytochrome c oxidase is the component of the respiratory chain that catalyzes the reduction of oxygen to water. Electrons originating from reduced cytochrome c in the intermembrane space (IMS) are transferred via the dinuclear copper A center (CU(A)) of subunit 2 and heme A of subunit 1 to the active site in subunit 1, a binuclear center (BNC) formed by heme A3 and copper B (CU(B)). The BNC reduces molecular oxygen to 2 water molecules using 4 electrons from cytochrome c in the IMS and 4 protons from the mitochondrial matrix. The chain is Cytochrome c oxidase subunit 2 (MT-CO2) from Desmodillus auricularis (Cape short-eared gerbil).